We begin with the raw amino-acid sequence, 415 residues long: Multidrug resistance protein MdtA (415 aa).

Positions 1-21 (MKGSYKSRWVIVIVVVIAAIA) are cleaved as a signal peptide. Residues 31–46 (DSQSAAPGATKQAQQS) are compositionally biased toward polar residues. Disordered stretches follow at residues 31–56 (DSQSAAPGATKQAQQSPAGGRRGMRA) and 392–415 (EAQSATTPEEKATSREYAKKGARS). Residues 399 to 415 (PEEKATSREYAKKGARS) show a composition bias toward basic and acidic residues.

The protein belongs to the membrane fusion protein (MFP) (TC 8.A.1) family. In terms of assembly, part of a tripartite efflux system composed of MdtA, MdtB and MdtC.

It localises to the cell inner membrane. The MdtABC tripartite complex confers resistance against novobiocin and deoxycholate. This Escherichia coli O6:K15:H31 (strain 536 / UPEC) protein is Multidrug resistance protein MdtA.